The chain runs to 436 residues: Testican-3 (436 aa).

The first 21 residues, 1-21 (MLKVSAVLCVCAAAWCSQSLA), serve as a signal peptide directing secretion. 8 disulfide bridges follow: Cys90/Cys101, Cys95/Cys111, Cys139/Cys169, Cys142/Cys162, Cys151/Cys183, Cys317/Cys341, Cys352/Cys359, and Cys361/Cys380. The 53-residue stretch at 133 to 185 (GPILSTCKQCPVVYPSPVCGSDGHTYSFQCKLEYQACVLGKQISVKCEGHCPC) folds into the Kazal-like domain. A Thyroglobulin type-1 domain is found at 314–380 (DPPCQTELSN…GSRINGVADC (67 aa)). Ser387 and Ser392 each carry an O-linked (Xyl...) (glycosaminoglycan) serine glycan. The tract at residues 393-436 (GDFHEWTDDEDDEDDIMNDEDEIEDDDEDEGDDDDGGDDHDVYI) is disordered. Residues 399–430 (TDDEDDEDDIMNDEDEIEDDDEDEGDDDDGGD) are compositionally biased toward acidic residues.

In terms of processing, contains chondroitin sulfate and heparan sulfate O-linked oligosaccharides. As to expression, expressed in brain.

Its subcellular location is the secreted. It is found in the extracellular space. The protein resides in the extracellular matrix. May participate in diverse steps of neurogenesis. Inhibits the processing of pro-matrix metalloproteinase 2 (MMP-2) by MT1-MMP and MT3-MMP. May interfere with tumor invasion. This chain is Testican-3 (SPOCK3), found in Homo sapiens (Human).